The primary structure comprises 221 residues: 3-isopropylmalate dehydratase small subunit (221 aa).

This sequence belongs to the LeuD family. LeuD type 1 subfamily. As to quaternary structure, heterodimer of LeuC and LeuD.

It catalyses the reaction (2R,3S)-3-isopropylmalate = (2S)-2-isopropylmalate. It participates in amino-acid biosynthesis; L-leucine biosynthesis; L-leucine from 3-methyl-2-oxobutanoate: step 2/4. Functionally, catalyzes the isomerization between 2-isopropylmalate and 3-isopropylmalate, via the formation of 2-isopropylmaleate. This Nitrosomonas europaea (strain ATCC 19718 / CIP 103999 / KCTC 2705 / NBRC 14298) protein is 3-isopropylmalate dehydratase small subunit.